We begin with the raw amino-acid sequence, 128 residues long: Large ribosomal subunit protein bL20c (128 aa).

It belongs to the bacterial ribosomal protein bL20 family.

It is found in the plastid. Its function is as follows. Binds directly to 23S ribosomal RNA and is necessary for the in vitro assembly process of the 50S ribosomal subunit. It is not involved in the protein synthesizing functions of that subunit. The polypeptide is Large ribosomal subunit protein bL20c (rpl20) (Epifagus virginiana (Beechdrops)).